A 247-amino-acid polypeptide reads, in one-letter code: METFKSILHEAQRIVVLTGAGMSTESGIPDFRSAGGIWTEDASRMEAMSLDYFLSYPRLFWPKFKELFQMKMSGSFEPNEGHLLLAELEKQGKQVDIFTQNIDGLHKKAGSRHVYELHGSIQTAACPACGARYDLPHLLEREVPECTAAGNNGDICGTVLKTDVVLFGDAVMHFDTLYEKLDQADLLLVIGTSLEVAPARFVPEDASLIPGMKKVIINLEPTYCDSLFDMVIHQKIGEFARSLGMKK.

Residues 1–247 enclose the Deacetylase sirtuin-type domain; that stretch reads METFKSILHE…EFARSLGMKK (247 aa). Positions 20, 24, 31, 32, 100, 102, 103, and 118 each coordinate NAD(+). Phe31 is a nicotinamide binding site. Residues Ile102 and Asp103 each coordinate nicotinamide. His118 serves as the catalytic Proton acceptor. Zn(2+)-binding residues include Cys126, Cys129, Cys146, and Cys156. Residues Thr192, Ser193, Asn218, and Ile236 each coordinate NAD(+).

The protein belongs to the sirtuin family. Class U subfamily. Requires Zn(2+) as cofactor.

The protein localises to the cytoplasm. It carries out the reaction N(6)-acetyl-L-lysyl-[protein] + NAD(+) + H2O = 2''-O-acetyl-ADP-D-ribose + nicotinamide + L-lysyl-[protein]. In terms of biological role, NAD-dependent protein deacetylase which modulates the activities of several enzymes which are inactive in their acetylated form. The chain is NAD-dependent protein deacetylase from Bacillus subtilis (strain 168).